We begin with the raw amino-acid sequence, 255 residues long: Very-long-chain (3R)-3-hydroxyacyl-CoA dehydratase 2 (255 aa).

Residues 3-42 lie on the Cytoplasmic side of the membrane; that stretch reads AAAAATAAAKGNGGGGGRAGAGDASGTRKKKGPGPLATAY. The disordered stretch occupies residues 11-34; that stretch reads AKGNGGGGGRAGAGDASGTRKKKG. The segment covering 13–22 has biased composition (gly residues); that stretch reads GNGGGGGRAG. Residues 43 to 61 form a helical membrane-spanning segment; that stretch reads LVIYNVVMTAGWLVIAVGL. The Lumenal portion of the chain corresponds to 62–80; that stretch reads VRAYLAKGSYHSLYYSIEK. A helical transmembrane segment spans residues 81–98; the sequence is PLKFFQTGALLEILHCAI. The Cytoplasmic portion of the chain corresponds to 99-108; sequence GIVPSSVVLT. The helical transmembrane segment at 109–126 threads the bilayer; sequence SFQVMSRVFLIWAVTHSV. Residues 127 to 131 are Lumenal-facing; that stretch reads KEVQS. Residues 132 to 147 form a helical membrane-spanning segment; sequence EDSVLLFVIAWTITEI. Residues 148–170 are Cytoplasmic-facing; it reads IRYSFYTFSLLNHLPYLIKWARY. A helical transmembrane segment spans residues 171–188; it reads TLFIVLYPMGVSGELLTI. Active-site residues include Tyr-177 and Glu-184. The Lumenal portion of the chain corresponds to 189-218; it reads YAALPFVRQAGLYSISLPNKYNFSFDYYAF. Residues 199–215 form a may be involved in interaction with TECR region; the sequence is GLYSISLPNKYNFSFDY. Asn-210 carries an N-linked (GlcNAc...) asparagine glycan. Residues 219–236 traverse the membrane as a helical segment; that stretch reads LILIMISYIPIFPQLYFH. Over 237 to 255 the chain is Cytoplasmic; it reads MIHQRRKILSHTEEHKKFE.

The protein belongs to the very long-chain fatty acids dehydratase HACD family. As to quaternary structure, may interact with enzymes of the ELO family (including ELOVL1); with those enzymes that mediate condensation, the first of the four steps of the reaction cycle responsible for fatty acids elongation, may be part of a larger fatty acids elongase complex. Interacts with BCAP31. Interacts (via the third lumenal loop) with TECR.

It is found in the endoplasmic reticulum membrane. It carries out the reaction a very-long-chain (3R)-3-hydroxyacyl-CoA = a very-long-chain (2E)-enoyl-CoA + H2O. The enzyme catalyses (3R)-hydroxyhexadecanoyl-CoA = (2E)-hexadecenoyl-CoA + H2O. It catalyses the reaction (3R)-hydroxyoctadecanoyl-CoA = (2E)-octadecenoyl-CoA + H2O. The catalysed reaction is (3R)-hydroxyeicosanoyl-CoA = (2E)-eicosenoyl-CoA + H2O. It carries out the reaction (3R)-hydroxydocosanoyl-CoA = (2E)-docosenoyl-CoA + H2O. The enzyme catalyses (3R)-hydroxytetracosanoyl-CoA = (2E)-tetracosenoyl-CoA + H2O. It catalyses the reaction (3R)-hydroxyhexacosanoyl-CoA = (2E)-hexacosenoyl-CoA + H2O. The protein operates within lipid metabolism; fatty acid biosynthesis. Its function is as follows. Catalyzes the third of the very long-chain fatty acids (VLCFA) elongation four-step cycle (condensation, reduction, dehydration, and reduction). This endoplasmic reticulum-elongation process is characterized by the addition of two carbons to the lipid chain through each cycle. This enzyme catalyzes the dehydration of the 3-hydroxyacyl-CoA intermediate into trans-2,3-enoyl-CoA, within each cycle of elongation. Therefore, it participates in the production of various VLCFAs involved in multiple biological processes as precursors of membrane lipids and lipid mediators. This Pongo abelii (Sumatran orangutan) protein is Very-long-chain (3R)-3-hydroxyacyl-CoA dehydratase 2.